Reading from the N-terminus, the 788-residue chain is Endonuclease MutS2 (788 aa).

335-342 (GPNTGGKT) contributes to the ATP binding site. The segment at 688–708 (VKSASKTKKRSGGTSITKQSA) is disordered. Residues 699–708 (GGTSITKQSA) are compositionally biased toward polar residues. The Smr domain occupies 713–788 (LDLRGVRVEE…GHGVTIIELK (76 aa)).

This sequence belongs to the DNA mismatch repair MutS family. MutS2 subfamily. In terms of assembly, homodimer. Binds to stalled ribosomes, contacting rRNA.

Endonuclease that is involved in the suppression of homologous recombination and thus may have a key role in the control of bacterial genetic diversity. Its function is as follows. Acts as a ribosome collision sensor, splitting the ribosome into its 2 subunits. Detects stalled/collided 70S ribosomes which it binds and splits by an ATP-hydrolysis driven conformational change. Acts upstream of the ribosome quality control system (RQC), a ribosome-associated complex that mediates the extraction of incompletely synthesized nascent chains from stalled ribosomes and their subsequent degradation. Probably generates substrates for RQC. The protein is Endonuclease MutS2 of Exiguobacterium sibiricum (strain DSM 17290 / CCUG 55495 / CIP 109462 / JCM 13490 / 255-15).